The chain runs to 1374 residues: DNA-directed RNA polymerase subunit beta (1374 aa).

It belongs to the RNA polymerase beta chain family. In terms of assembly, the RNAP catalytic core consists of 2 alpha, 1 beta, 1 beta' and 1 omega subunit. When a sigma factor is associated with the core the holoenzyme is formed, which can initiate transcription.

It carries out the reaction RNA(n) + a ribonucleoside 5'-triphosphate = RNA(n+1) + diphosphate. DNA-dependent RNA polymerase catalyzes the transcription of DNA into RNA using the four ribonucleoside triphosphates as substrates. This chain is DNA-directed RNA polymerase subunit beta, found in Acidovorax ebreus (strain TPSY) (Diaphorobacter sp. (strain TPSY)).